The following is a 122-amino-acid chain: Large ribosomal subunit protein bL12 (122 aa).

It belongs to the bacterial ribosomal protein bL12 family. Homodimer. Part of the ribosomal stalk of the 50S ribosomal subunit. Forms a multimeric L10(L12)X complex, where L10 forms an elongated spine to which 2 to 4 L12 dimers bind in a sequential fashion. Binds GTP-bound translation factors.

Forms part of the ribosomal stalk which helps the ribosome interact with GTP-bound translation factors. Is thus essential for accurate translation. This chain is Large ribosomal subunit protein bL12, found in Vibrio parahaemolyticus serotype O3:K6 (strain RIMD 2210633).